Here is a 35-residue protein sequence, read N- to C-terminus: Small toxic polypeptide LdrB (35 aa).

The helical transmembrane segment at 10–30 (FWHDLAAPILAGIITAAIVGW) threads the bilayer.

Belongs to the Ldr toxic peptide family.

The protein localises to the cell inner membrane. Its function is as follows. Toxic component of a type I toxin-antitoxin (TA) system. Overexpression causes rapid cell killing, probably by disrupting the cell inner membrane and disruption of ATP synthesis. The polypeptide is Small toxic polypeptide LdrB (ldrB) (Escherichia coli (strain K12)).